The primary structure comprises 88 residues: FXYD domain-containing ion transport regulator 3 (88 aa).

Residues 1–20 (MQEVVLSLLVLLAGLPTLDA) constitute a signal peptide (not cleaved). Over 1-38 (MQEVVLSLLVLLAGLPTLDANDPENKNDPFYYDWYSLR) the chain is Extracellular. Residues 39-59 (VGGLICAGILCALGIIVLMSG) form a helical membrane-spanning segment. Topologically, residues 60 to 88 (KCKCKFRQKPSHRPGEGPPLITPGSAHNC) are cytoplasmic. Positions 67–88 (QKPSHRPGEGPPLITPGSAHNC) are disordered.

The protein belongs to the FXYD family. Regulatory subunit of the sodium/potassium-transporting ATPase which is composed of a catalytic alpha subunit, a non-catalytic beta subunit and an additional regulatory subunit. Interacts with catalytic alpha subunit ATP1A1. Also interacts with non-catalytic beta subunit ATP1B1. Interacts with the ATP1A1-ATP1B1, ATP1A2-ATP1B1 and ATP1A3-ATP1B1 NKA isozymes. Post-translationally, glutathionylated. In terms of tissue distribution, expressed at high levels in heart, skeletal muscle and liver with low levels of expression in breast, brain, lung, stomach and colon. In the gastric gland, mainly expressed in the mucus cells forming the upper part of the gland and is absent from the parietal cells.

The protein resides in the cell membrane. In terms of biological role, associates with and regulates the activity of the sodium/potassium-transporting ATPase (NKA) which transports Na(+) out of the cell and K(+) into the cell. Reduces glutathionylation of the NKA beta-1 subunit ATP1B1, thus reversing glutathionylation-mediated inhibition of ATP1B1. Induces a hyperpolarization-activated chloride current when expressed in Xenopus oocytes. The sequence is that of FXYD domain-containing ion transport regulator 3 (Fxyd3) from Mus musculus (Mouse).